Reading from the N-terminus, the 729-residue chain is Fatty acid oxidation complex subunit alpha (729 aa).

The segment at 1 to 189 (MLYKGDTLYL…KIGLVDGVVK (189 aa)) is enoyl-CoA hydratase/isomerase. Residue aspartate 296 coordinates substrate. The 3-hydroxyacyl-CoA dehydrogenase stretch occupies residues 311–729 (ETPKQAAVLG…ARPVGSLKTA (419 aa)). NAD(+) contacts are provided by residues methionine 324, aspartate 343, 400–402 (VVE), lysine 407, and serine 429. Residue histidine 450 is the For 3-hydroxyacyl-CoA dehydrogenase activity of the active site. Asparagine 453 is an NAD(+) binding site. 2 residues coordinate substrate: asparagine 500 and tyrosine 660. A disordered region spans residues 708–729 (RHNEPYYPPVEPARPVGSLKTA).

In the N-terminal section; belongs to the enoyl-CoA hydratase/isomerase family. This sequence in the C-terminal section; belongs to the 3-hydroxyacyl-CoA dehydrogenase family. As to quaternary structure, heterotetramer of two alpha chains (FadB) and two beta chains (FadA).

It catalyses the reaction a (3S)-3-hydroxyacyl-CoA + NAD(+) = a 3-oxoacyl-CoA + NADH + H(+). The enzyme catalyses a (3S)-3-hydroxyacyl-CoA = a (2E)-enoyl-CoA + H2O. It carries out the reaction a 4-saturated-(3S)-3-hydroxyacyl-CoA = a (3E)-enoyl-CoA + H2O. The catalysed reaction is (3S)-3-hydroxybutanoyl-CoA = (3R)-3-hydroxybutanoyl-CoA. It catalyses the reaction a (3Z)-enoyl-CoA = a 4-saturated (2E)-enoyl-CoA. The enzyme catalyses a (3E)-enoyl-CoA = a 4-saturated (2E)-enoyl-CoA. It participates in lipid metabolism; fatty acid beta-oxidation. In terms of biological role, involved in the aerobic and anaerobic degradation of long-chain fatty acids via beta-oxidation cycle. Catalyzes the formation of 3-oxoacyl-CoA from enoyl-CoA via L-3-hydroxyacyl-CoA. It can also use D-3-hydroxyacyl-CoA and cis-3-enoyl-CoA as substrate. The polypeptide is Fatty acid oxidation complex subunit alpha (Salmonella gallinarum (strain 287/91 / NCTC 13346)).